We begin with the raw amino-acid sequence, 314 residues long: Short-chain dehydrogenase/reductase sthC (314 aa).

A compositionally biased stretch (polar residues) spans 1–10 (MAPAETTGNV). Positions 1–27 (MAPAETTGNVQRPEAGKQSMGSFWTQM) are disordered. Residues valine 56, lysine 80, aspartate 105, asparagine 132, and arginine 167 each coordinate NADP(+). Residue serine 191 is the Proton donor of the active site. NADP(+) is bound by residues tyrosine 222 and lysine 226. Residue tyrosine 222 is the Proton acceptor of the active site. Catalysis depends on lysine 226, which acts as the Lowers pKa of active site Tyr.

It belongs to the short-chain dehydrogenases/reductases (SDR) family.

It catalyses the reaction dehydroprobetaenone I + AH2 = probetaenone I + A. It carries out the reaction betaenone C + AH2 = betaenone B + A. The protein operates within mycotoxin biosynthesis. Short-chain dehydrogenase/reductase; part of the gene cluster that mediates the biosynthesis of the phytotoxin stemphyloxin II. The first step of the pathway is the synthesis of dehydroprobetaenone I by the polyketide synthase sthA and the enoyl reductase sthE via condensation of one acetyl-CoA starter unit with 7 malonyl-CoA units and 5 methylations. The C-terminal reductase (R) domain of sthA catalyzes the reductive release of the polyketide chain. Because sthA lacks a designated enoylreductase (ER) domain, the required activity is provided the enoyl reductase sthE. The short-chain dehydrogenase/reductase sthC then catalyzes reduction of dehydroprobetaenone I to probetaenone I. The cytochrome P450 monooxygenase sthF catalyzes successive epoxidation, oxidation (resulting from epoxide opening) and hydroxylation to install a tertiary alcohol in the decaline ring to yield betaenone C from dehydroprobetaenone I and betaenone B from probetaenone I. The FAD-linked oxidoreductase sthB is responsible for the conversion of betaenone C to betaenone A via an intramolecular aldol reaction between C-1 and C-17 to form the bridged tricyclic system in betaenone A. Finally, the cytochrome P450 monooxygenase sthD catalyzes the hydroxylation of C-15 to afford the final metabolite stemphyloxin II. In Phaeosphaeria nodorum (strain SN15 / ATCC MYA-4574 / FGSC 10173) (Glume blotch fungus), this protein is Short-chain dehydrogenase/reductase sthC.